The chain runs to 118 residues: BLOC-1-related complex subunit 8 (118 aa).

The segment covering 98-107 (KEQISNSQGR) has biased composition (polar residues). The segment at 98–118 (KEQISNSQGRSPHVSAPSASS) is disordered.

The protein belongs to the BORCS8 family.

It is found in the lysosome membrane. Functionally, as part of a BORC-like complex, it may play a role in the movement and localization of lysosomes at the cell periphery. Associated with the cytosolic face of lysosomes, this complex may couple lysosomes to microtubule plus-end-directed kinesin motors, driving lysosome movement toward the cell periphery. The protein is BLOC-1-related complex subunit 8 of Tetraodon nigroviridis (Spotted green pufferfish).